The chain runs to 149 residues: Macrodomain Ter protein (149 aa).

It belongs to the MatP family. As to quaternary structure, homodimer.

It is found in the cytoplasm. Its function is as follows. Required for spatial organization of the terminus region of the chromosome (Ter macrodomain) during the cell cycle. Prevents early segregation of duplicated Ter macrodomains during cell division. Binds specifically to matS, which is a 13 bp signature motif repeated within the Ter macrodomain. This chain is Macrodomain Ter protein, found in Vibrio parahaemolyticus serotype O3:K6 (strain RIMD 2210633).